A 133-amino-acid chain; its full sequence is Ribosome-binding factor A (133 aa).

This sequence belongs to the RbfA family. In terms of assembly, monomer. Binds 30S ribosomal subunits, but not 50S ribosomal subunits or 70S ribosomes.

It localises to the cytoplasm. Functionally, one of several proteins that assist in the late maturation steps of the functional core of the 30S ribosomal subunit. Associates with free 30S ribosomal subunits (but not with 30S subunits that are part of 70S ribosomes or polysomes). Required for efficient processing of 16S rRNA. May interact with the 5'-terminal helix region of 16S rRNA. This chain is Ribosome-binding factor A, found in Synechocystis sp. (strain ATCC 27184 / PCC 6803 / Kazusa).